The chain runs to 760 residues: Molybdenum cofactor sulfurase 2 (760 aa).

Residue Lys-223 is modified to N6-(pyridoxal phosphate)lysine. Cys-389 is an active-site residue. Positions 608-758 (QSDDEARTLR…LHCGSPLQVV (151 aa)) constitute an MOSC domain.

The protein belongs to the class-V pyridoxal-phosphate-dependent aminotransferase family. MOCOS subfamily. It depends on pyridoxal 5'-phosphate as a cofactor.

It catalyses the reaction Mo-molybdopterin + L-cysteine + AH2 = thio-Mo-molybdopterin + L-alanine + A + H2O. Its function is as follows. Sulfurates the molybdenum cofactor. Sulfation of molybdenum is essential for xanthine dehydrogenase (XDH) and aldehyde oxidase (ADO) enzymes in which molybdenum cofactor is liganded by 1 oxygen and 1 sulfur atom in active form. The protein is Molybdenum cofactor sulfurase 2 of Culex quinquefasciatus (Southern house mosquito).